A 483-amino-acid chain; its full sequence is MAADEVAGGARKATKSKLFEFLVHGVRPGMPSGARMPHQGAPMGPPGSPYMGSPAVRPGLAPAGMEPARKRAAPPPGQSQAQGQGQPVPTAPARSRSAKRRKMADKILPQRIRELVPESQAYMDLLAFERKLDQTIMRKRVDIQEALKRPMKQKRKLRLYISNTFNPAKPDAEDSDGSIASWELRVEGKLLDDPSKQKRKFSSFFKSLVIELDKDLYGPDNHLVEWHRTPTTQETDGFQVKRPGDLSVRCTLLLMLDYQPPQFKLDPRLARLLGLHTQSRSAIVQALWQYVKTNRLQDSHDKEYINGDKYFQQIFDCPRLKFSEIPQRLTALLLPPDPIVINHVISVDPSDQKKTACYDIDVEVEEPLKGQMSSFLLSTANQQEISALDSKIHETIESINQLKIQRDFMLSFSRDPKGYVQDLLRSQSRDLKVMTDVAGNPEEERRAEFYHQPWSQEAVSRYFYCKIQQRRQELEQSLVVRNT.

Residue Ala2 is modified to N-acetylalanine. The tract at residues 27–102 is disordered; sequence RPGMPSGARM…ARSRSAKRRK (76 aa). Positions 78 to 88 are enriched in low complexity; sequence QSQAQGQGQPV. Position 178 is a phosphoserine (Ser178). Residues 258 to 335 enclose the SWIB/MDM2 domain; sequence YQPPQFKLDP…PQRLTALLLP (78 aa).

It belongs to the SMARCD family. As to quaternary structure, component of the multiprotein chromatin-remodeling complexes SWI/SNF: SWI/SNF-A (BAF), SWI/SNF-B (PBAF) and related complexes. The canonical complex contains a catalytic subunit (either SMARCA4/BRG1/BAF190A or SMARCA2/BRM/BAF190B) and at least SMARCE1, ACTL6A/BAF53, SMARCC1/BAF155, SMARCC2/BAF170, and SMARCB1/SNF5/BAF47. Other subunits specific to each of the complexes may also be present permitting several possible combinations developmentally and tissue specific. Component of the BAF complex, which includes at least actin (ACTB), ARID1A/BAF250A, ARID1B/BAF250B, SMARCA2/BRM, SMARCA4/BRG1/BAF190A, ACTL6A/BAF53, ACTL6B/BAF53B, SMARCE1/BAF57, SMARCC1/BAF155, SMARCC2/BAF170, SMARCB1/SNF5/INI1, and one or more SMARCD1/BAF60A, SMARCD2/BAF60B, or SMARCD3/BAF60C. In muscle cells, the BAF complex also contains DPF3. Component of neural progenitors-specific chromatin remodeling complex (npBAF complex) composed of at least, ARID1A/BAF250A or ARID1B/BAF250B, SMARCD1/BAF60A, SMARCD3/BAF60C, SMARCA2/BRM/BAF190B, SMARCA4/BRG1/BAF190A, SMARCB1/BAF47, SMARCC1/BAF155, SMARCE1/BAF57, SMARCC2/BAF170, PHF10/BAF45A, ACTL6A/BAF53A and actin. Component of neuron-specific chromatin remodeling complex (nBAF complex) composed of at least, ARID1A/BAF250A or ARID1B/BAF250B, SMARCD1/BAF60A, SMARCD3/BAF60C, SMARCA2/BRM/BAF190B, SMARCA4/BRG1/BAF190A, SMARCB1/BAF47, SMARCC1/BAF155, SMARCE1/BAF57, SMARCC2/BAF170, DPF1/BAF45B, DPF3/BAF45C, ACTL6B/BAF53B and actin. May be a component of the SWI/SNF-B (PBAF) chromatin remodeling complex, at least composed of SMARCA4/BRG1, SMARCB1/BAF47/SNF5, ACTL6A/BAF53A or ACTL6B/BAF53B, SMARCE1/BAF57, SMARCD1/BAF60A, SMARCD2/BAF60B, perhaps SMARCD3/BAF60C, SMARCC1/BAF155, SMARCC2/BAF170, PBRM1/BAF180, ARID2/BAF200 and actin. Component of SWI/SNF (GBAF) subcomplex, which includes at least BICRA or BICRAL (mutually exclusive), BRD9, SS18, SMARCA2/BRM, SMARCA4/BRG1/BAF190A, ACTL6A/BAF53, SMARCC1/BAF155, and SMARCD1/BAF60A. Interacts with SMARCA4/BRG1/BAF190A. The precise distribution of the related SMARCD1, SMARCD2 and SMARCD3 proteins among these and other SWI/SNF nucleosome-remodeling complexes is not fully known. May allow recruitment of SWI/SNF containing complexes specifically to promoters where these factors are located. Also interacts with several nuclear receptors including PPARG/NR1C3, RXRA/NR1F1, ESR1, NR5A1, NR5A2/LRH1 and other transcriptional activators including the HLH protein SREBF1/SREBP1 and the homeobox protein PBX1. Interacts with PRDM1/BLIMP1. In terms of tissue distribution, ubiquitously expressed.

The protein resides in the nucleus. Involved in transcriptional activation and repression of select genes by chromatin remodeling (alteration of DNA-nucleosome topology). Component of SWI/SNF chromatin remodeling complexes that carry out key enzymatic activities, changing chromatin structure by altering DNA-histone contacts within a nucleosome in an ATP-dependent manner. Stimulates nuclear receptor mediated transcription. Belongs to the neural progenitors-specific chromatin remodeling complex (npBAF complex) and the neuron-specific chromatin remodeling complex (nBAF complex). During neural development a switch from a stem/progenitor to a postmitotic chromatin remodeling mechanism occurs as neurons exit the cell cycle and become committed to their adult state. The transition from proliferating neural stem/progenitor cells to postmitotic neurons requires a switch in subunit composition of the npBAF and nBAF complexes. As neural progenitors exit mitosis and differentiate into neurons, npBAF complexes which contain ACTL6A/BAF53A and PHF10/BAF45A, are exchanged for homologous alternative ACTL6B/BAF53B and DPF1/BAF45B or DPF3/BAF45C subunits in neuron-specific complexes (nBAF). The npBAF complex is essential for the self-renewal/proliferative capacity of the multipotent neural stem cells. The nBAF complex along with CREST plays a role regulating the activity of genes essential for dendrite growth. The chain is SWI/SNF-related matrix-associated actin-dependent regulator of chromatin subfamily D member 3 (Smarcd3) from Mus musculus (Mouse).